The sequence spans 330 residues: Putative zinc finger protein CONSTANS-LIKE 11 (330 aa).

Zn(2+) contacts are provided by Cys-5, Cys-8, Cys-28, and His-33. The segment at 5–47 (CDFCGTEKALIYCKSDSAKLCLNCDVNVHSANPLSQRHTRSLL) adopts a B box-type 1; atypical zinc-finger fold. The segment at 48–88 (CEKCSLQPTAVHCMNENVSLCQGCQWTASNCTGLGHRLQSL) adopts a B box-type 2; degenerate zinc-finger fold. The 43-residue stretch at 276 to 318 (RDEAKKRYKQKKSKRMFGKQIRYASRKARADTRKRVKGRFVKS) folds into the CCT domain.

It belongs to the CONSTANS family.

It is found in the nucleus. The polypeptide is Putative zinc finger protein CONSTANS-LIKE 11 (COL11) (Arabidopsis thaliana (Mouse-ear cress)).